The following is a 468-amino-acid chain: Argininosuccinate lyase (468 aa).

Residues Ser33, Asn121, and Thr166 each coordinate 2-(N(omega)-L-arginino)succinate. The Proton acceptor role is filled by His167. Residue Ser288 is the Proton donor of the active site. Positions 296, 328, 333, and 336 each coordinate 2-(N(omega)-L-arginino)succinate.

The protein belongs to the lyase 1 family. Argininosuccinate lyase subfamily. In terms of assembly, homotetramer.

It catalyses the reaction 2-(N(omega)-L-arginino)succinate = fumarate + L-arginine. The protein operates within amino-acid biosynthesis; L-arginine biosynthesis; L-arginine from L-ornithine and carbamoyl phosphate: step 3/3. The polypeptide is Argininosuccinate lyase (ARG4) (Candida albicans (Yeast)).